Consider the following 78-residue polypeptide: Small ribosomal subunit protein bS18 (78 aa).

It belongs to the bacterial ribosomal protein bS18 family. In terms of assembly, part of the 30S ribosomal subunit. Forms a tight heterodimer with protein bS6.

Its function is as follows. Binds as a heterodimer with protein bS6 to the central domain of the 16S rRNA, where it helps stabilize the platform of the 30S subunit. The chain is Small ribosomal subunit protein bS18 from Pseudothermotoga lettingae (strain ATCC BAA-301 / DSM 14385 / NBRC 107922 / TMO) (Thermotoga lettingae).